Consider the following 420-residue polypeptide: Protein BDLF2 (420 aa).

Disordered regions lie at residues 1–21 (MVDEQVAVEHGTVSHTISREE) and 64–129 (AAAV…GGQR). Over 1–184 (MVDEQVAVEH…AETLAEPPRC (184 aa)) the chain is Intravirion. Positions 90–108 (TKTNTQDQNQNQTTRTRTN) are enriched in low complexity. Residues 185–205 (FMLSFVFIYYCCYLAFLALLA) form a helical; Signal-anchor for type II membrane protein membrane-spanning segment. Topologically, residues 206 to 420 (FGFNPLFLPS…LEEVMYVMVQ (215 aa)) are virion surface. N-linked (GlcNAc...) asparagine; by host glycosylation is found at Asn258, Asn264, Asn300, Asn304, Asn371, and Asn384.

This sequence belongs to the herpesviridae BDLF2 family. In terms of assembly, interacts with BMRF2.

Its subcellular location is the virion membrane. In terms of biological role, rearranges cellular actin to increase intercellular contacts and thereby promote virus cell-to-cell spreading. Induce the outgrowth of long, branched plasma membrane fronds to create intercellular network for virion traffic. The fronds are actin based and RhoA-dependent. This is Protein BDLF2 from Homo sapiens (Human).